Here is a 1798-residue protein sequence, read N- to C-terminus: Non-reducing polyketide synthase nscA (1798 aa).

The tract at residues Arg25–His256 is N-terminal acylcarrier protein transacylase domain (SAT). The region spanning Ser392–Asp825 is the Ketosynthase family 3 (KS3) domain. Active-site for beta-ketoacyl synthase activity residues include Cys565, His700, and His743. The interval Phe931–Pro1224 is malonyl-CoA:ACP transacylase (MAT) domain. The segment at His1322–Ala1458 is N-terminal hotdog fold. The PKS/mFAS DH domain maps to His1322–Asp1632. The active-site Proton acceptor; for dehydratase activity is the His1354. The tract at residues His1390–Arg1628 is product template (PT) domain. Residues Ala1486–Asp1632 form a C-terminal hotdog fold region. Catalysis depends on Asp1543, which acts as the Proton donor; for dehydratase activity. The segment at Leu1695–Pro1721 is disordered. Residues Pro1721 to Cys1798 form the Carrier domain. Ser1758 bears the O-(pantetheine 4'-phosphoryl)serine mark.

Pantetheine 4'-phosphate is required as a cofactor.

The protein operates within secondary metabolite biosynthesis. Non-reducing polyketide synthase; part of the gene cluster that mediates the biosynthesis of neosartoricin B, a prenylated anthracenone that probably exhibits T-cell antiproliferative activity, suggestive of a physiological role as an immunosuppressive agent. The non-reducing polyketide synthase nscA probably synthesizes and cyclizes the decaketide backbone. The hydrolase nscB then mediates the product release through hydrolysis followed by spontaneous decarboxylation. The prenyltransferase nscD catalyzes the addition of the dimethylallyl group to the aromatic C5. The FAD-dependent monooxygenase nscC is then responsible for the stereospecific hydroxylation at C2. Neosartoricin B can be converted into two additional compounds neosartoricins C and D. Neosartoricin C is a spirocyclic compound that is cyclized through the attack of C3 hydroxyl on C14, followed by dehydration. On the other hand, neosartoricin D is a further cyclized compound in which attack of C2 on C14 in neosartoricin C results in the formation of the acetal-containing dioxabicyclo-octanone ring. Both of these compounds are novel and possibly represent related metabolites of the gene cluster. This Trichophyton rubrum (strain ATCC MYA-4607 / CBS 118892) (Athlete's foot fungus) protein is Non-reducing polyketide synthase nscA.